The following is a 481-amino-acid chain: Putative amino-acid transporter CPE0389 (481 aa).

Transmembrane regions (helical) follow at residues 7 to 27, 36 to 56, 87 to 107, 127 to 147, 156 to 176, 208 to 228, 241 to 261, 289 to 309, 338 to 358, 364 to 384, 401 to 421, 422 to 442, and 461 to 481; these read LGVI…GVYN, ASAG…WFIA, FLMA…YAVL, LSIA…LAGV, IGTI…LFSF, STML…VVSG, FLGF…PLGV, VIMN…WTVM, FSLL…HFAG, MLSI…LYLF, RKYA…LIYA, AGIN…PVFI, and YFAI…FKFM.

Belongs to the amino acid-polyamine-organocation (APC) superfamily. Basic amino acid/polyamine antiporter (APA) (TC 2.A.3.2) family.

The protein resides in the cell membrane. Functionally, could be an amino acid transporter. This is Putative amino-acid transporter CPE0389 from Clostridium perfringens (strain 13 / Type A).